The primary structure comprises 184 residues: Large ribosomal subunit protein uL5c (184 aa).

It belongs to the universal ribosomal protein uL5 family. Part of the 50S ribosomal subunit; contacts the 5S rRNA.

The protein resides in the plastid. It localises to the chloroplast. Binds 5S rRNA, forms part of the central protuberance of the 50S subunit. The sequence is that of Large ribosomal subunit protein uL5c (rpl5) from Zygnema circumcarinatum (Green alga).